The primary structure comprises 1228 residues: Membrane-anchored lipid-binding protein LAM1 (1228 aa).

The Cytoplasmic portion of the chain corresponds to 1-1062; it reads MHEHKAELRL…IFKCFSKVNK (1062 aa). Residues 308-421 enclose the PH domain; sequence EKGLSGWLYM…WINTLTSHKR (114 aa). The VASt domain occupies 773–978; sequence EAWCYFQDNF…KTREYLKKFN (206 aa). The chain crosses the membrane as a helical span at residues 1063–1083; sequence TLYYCLLISAVTNLFFVGKSI. Residues 1084-1228 lie on the Lumenal side of the membrane; that stretch reads HSYFSVKSAE…EYNRLSAIPV (145 aa). The N-linked (GlcNAc...) asparagine glycan is linked to N1205.

This sequence belongs to the SIP3 family.

It is found in the mitochondrion membrane. Its subcellular location is the endoplasmic reticulum membrane. Involved in mitochondrial fragmentation during programmed cell death in response to high levels of alpha-factor mating pheromone or the drug amiodarone. May be involved in sterol transfer between intracellular membranes. This Saccharomyces cerevisiae (strain ATCC 204508 / S288c) (Baker's yeast) protein is Membrane-anchored lipid-binding protein LAM1.